The sequence spans 160 residues: Ribosomal RNA large subunit methyltransferase H (160 aa).

S-adenosyl-L-methionine-binding positions include leucine 76, glycine 108, and 127–132 (FGFMTW).

Belongs to the RNA methyltransferase RlmH family. Homodimer.

It localises to the cytoplasm. The catalysed reaction is pseudouridine(1915) in 23S rRNA + S-adenosyl-L-methionine = N(3)-methylpseudouridine(1915) in 23S rRNA + S-adenosyl-L-homocysteine + H(+). In terms of biological role, specifically methylates the pseudouridine at position 1915 (m3Psi1915) in 23S rRNA. The polypeptide is Ribosomal RNA large subunit methyltransferase H (Bartonella henselae (strain ATCC 49882 / DSM 28221 / CCUG 30454 / Houston 1) (Rochalimaea henselae)).